The sequence spans 389 residues: Succinate--CoA ligase [ADP-forming] subunit beta (389 aa).

The ATP-grasp domain occupies 9–244 (KELLRQFNVP…IDEEDAAEIE (236 aa)). ATP is bound by residues Lys-46, 53-55 (GRG), Glu-99, Ala-102, and Glu-107. Mg(2+) is bound by residues Asn-199 and Asp-213. Substrate-binding positions include Asn-264 and 321–323 (GIM).

This sequence belongs to the succinate/malate CoA ligase beta subunit family. Heterotetramer of two alpha and two beta subunits. The cofactor is Mg(2+).

It catalyses the reaction succinate + ATP + CoA = succinyl-CoA + ADP + phosphate. It carries out the reaction GTP + succinate + CoA = succinyl-CoA + GDP + phosphate. Its pathway is carbohydrate metabolism; tricarboxylic acid cycle; succinate from succinyl-CoA (ligase route): step 1/1. Succinyl-CoA synthetase functions in the citric acid cycle (TCA), coupling the hydrolysis of succinyl-CoA to the synthesis of either ATP or GTP and thus represents the only step of substrate-level phosphorylation in the TCA. The beta subunit provides nucleotide specificity of the enzyme and binds the substrate succinate, while the binding sites for coenzyme A and phosphate are found in the alpha subunit. The protein is Succinate--CoA ligase [ADP-forming] subunit beta of Polynucleobacter asymbioticus (strain DSM 18221 / CIP 109841 / QLW-P1DMWA-1) (Polynucleobacter necessarius subsp. asymbioticus).